We begin with the raw amino-acid sequence, 853 residues long: Dynein axonemal assembly factor 5 (853 aa).

The residue at position 2 (alanine 2) is an N-acetylalanine. HEAT repeat units follow at residues 69–107 (GPWARLLLPRLLRLLSDPAEGCRALAAHLLDLGLRRAAR), 200–238 (HMQSESLIGPLMQTISHQHWKVRVAVIEATGTVIQFGSG), 240–276 (SVDDVLSHFAQRLFDDVPQVRQAVTSVVGGWLLNLRD), 278–316 (YSFLHKLTPLLLSSFSDEMPEIRQTATSLWEKVGLQWQQ), 374–412 (RVKAAQLLPVLLLHAEDHITQHLEIVLRTLHQACTDEEK), 597–636 (GEALQHVIPTLRACLQPSTDPHMRLKLFSILSMMLLRPKD), 694–732 (QEAQETLMPQVLATLEDDSQTTRLMSCRIINMFLKNSGD), 736–774 (PEKFLKVYPELLKRLDDVSNDVRMAAASALLTWLKCIES), and 782–820 (QSSVQFLYRELLVHLDDPESAIQDTVLEVLKEGSVLFPD).

This sequence belongs to the DNAAF5 family. Interacts with DNAI2; probably involved in outer arm dynein assembly. As to expression, expressed in ciliated cells including ependymal cells lining the lateral ventricles and multiciliated epithelium of oviduct ampulla.

The protein resides in the cytoplasm. Its subcellular location is the cytoplasmic granule. Its function is as follows. Cytoplasmic protein involved in the delivery of the dynein machinery to the motile cilium. It is required for the assembly of the axonemal dynein inner and outer arms, two structures attached to the peripheral outer doublet A microtubule of the axoneme, that play a crucial role in cilium motility. The protein is Dynein axonemal assembly factor 5 of Mus musculus (Mouse).